The chain runs to 388 residues: UTP--glucose-1-phosphate uridylyltransferase (388 aa).

Residue aspartate 118 participates in Mg(2+) binding.

Belongs to the CugP-type UDP-glucose pyrophosphorylase family. The cofactor is Mg(2+).

The catalysed reaction is alpha-D-glucose 1-phosphate + UTP + H(+) = UDP-alpha-D-glucose + diphosphate. Its function is as follows. Catalyzes the formation of UDP-glucose, from UTP and glucose 1-phosphate. Is highly specific since it cannot use other NTPs such as dTTP, CTP, ATP, and GTP, and other sugar-1P such as GlcNAc-1P, Gal-1P, and Man-1P, as substrates. Has probably a central and essential role as the substrate supplier for galactolipid synthesis; galactolipids are major constituents of the photosynthetic thylakoid membrane and important for photosynthetic activity. In Synechocystis sp. (strain ATCC 27184 / PCC 6803 / Kazusa), this protein is UTP--glucose-1-phosphate uridylyltransferase.